The chain runs to 217 residues: Adenylate kinase (217 aa).

11-16 (GSGKGT) contributes to the ATP binding site. An NMP region spans residues 31–61 (STGTMLRQALTRSTHKSYELHKNIMHTGDLV). AMP-binding positions include threonine 32, arginine 37, 59-61 (DLV), 87-90 (GFPR), and glutamine 94. The interval 124–161 (GRRIHVGSGRTYHIKFNPPRNYGLDDITGEILTTRKDD) is LID. Residues arginine 125 and 134–135 (TY) contribute to the ATP site. Residues arginine 158 and arginine 169 each coordinate AMP. Arginine 202 serves as a coordination point for ATP.

It belongs to the adenylate kinase family. As to quaternary structure, monomer.

It is found in the cytoplasm. The enzyme catalyses AMP + ATP = 2 ADP. It participates in purine metabolism; AMP biosynthesis via salvage pathway; AMP from ADP: step 1/1. In terms of biological role, catalyzes the reversible transfer of the terminal phosphate group between ATP and AMP. Plays an important role in cellular energy homeostasis and in adenine nucleotide metabolism. The chain is Adenylate kinase from Blochmanniella pennsylvanica (strain BPEN).